A 624-amino-acid chain; its full sequence is Bifunctional 3'-phosphoadenosine 5'-phosphosulfate synthase 1 (624 aa).

An N-acetylmethionine modification is found at M1. An adenylyl-sulfate kinase region spans residues 1-225 (MEIPGSLCKK…VVELLQERDI (225 aa)). K12 is subject to N6-acetyllysine. 62–67 (GAGKTT) provides a ligand contact to ATP. Adenosine 5'-phosphosulfate is bound by residues 89–92 (DNIR), F101, 106–109 (REEN), 132–133 (IS), K171, and 184–185 (GF). ATP-binding positions include C207, C212, 419–422 (QLRN), 521–525 (GRDPA), and A563. The segment at 234-624 (VKELYVPENK…VEYYKSLEKA (391 aa)) is sulfate adenylyltransferase.

It in the N-terminal section; belongs to the APS kinase family. This sequence in the C-terminal section; belongs to the sulfate adenylyltransferase family. As to quaternary structure, homodimer. Expressed in the neonatal brain and in cartilage.

The catalysed reaction is sulfate + ATP + H(+) = adenosine 5'-phosphosulfate + diphosphate. The enzyme catalyses adenosine 5'-phosphosulfate + ATP = 3'-phosphoadenylyl sulfate + ADP + H(+). The protein operates within sulfur metabolism; sulfate assimilation. Bifunctional enzyme with both ATP sulfurylase and APS kinase activity, which mediates two steps in the sulfate activation pathway. The first step is the transfer of a sulfate group to ATP to yield adenosine 5'-phosphosulfate (APS), and the second step is the transfer of a phosphate group from ATP to APS yielding 3'-phosphoadenylylsulfate (PAPS: activated sulfate donor used by sulfotransferase). In mammals, PAPS is the sole source of sulfate; APS appears to be only an intermediate in the sulfate-activation pathway. Required for normal biosynthesis of sulfated L-selectin ligands in endothelial cells. This is Bifunctional 3'-phosphoadenosine 5'-phosphosulfate synthase 1 (Papss1) from Mus musculus (Mouse).